The chain runs to 345 residues: 3-dehydroquinate synthase (345 aa).

Belongs to the archaeal-type DHQ synthase family.

It catalyses the reaction 2-amino-2,3,7-trideoxy-D-lyxo-hept-6-ulosonate + NAD(+) + H2O = 3-dehydroquinate + NH4(+) + NADH + H(+). Its function is as follows. Catalyzes the oxidative deamination and cyclization of 2-amino-3,7-dideoxy-D-threo-hept-6-ulosonic acid (ADH) to yield 3-dehydroquinate (DHQ), which is fed into the canonical shikimic pathway of aromatic amino acid biosynthesis. In Methanocorpusculum labreanum (strain ATCC 43576 / DSM 4855 / Z), this protein is 3-dehydroquinate synthase.